The following is a 156-amino-acid chain: Cyanate hydratase (156 aa).

Catalysis depends on residues R96, E99, and S122.

It belongs to the cyanase family.

The enzyme catalyses cyanate + hydrogencarbonate + 3 H(+) = NH4(+) + 2 CO2. In terms of biological role, catalyzes the reaction of cyanate with bicarbonate to produce ammonia and carbon dioxide. This Pseudomonas putida (strain W619) protein is Cyanate hydratase.